Here is a 178-residue protein sequence, read N- to C-terminus: ATP synthase subunit delta (178 aa).

It belongs to the ATPase delta chain family. As to quaternary structure, F-type ATPases have 2 components, F(1) - the catalytic core - and F(0) - the membrane proton channel. F(1) has five subunits: alpha(3), beta(3), gamma(1), delta(1), epsilon(1). F(0) has three main subunits: a(1), b(2) and c(10-14). The alpha and beta chains form an alternating ring which encloses part of the gamma chain. F(1) is attached to F(0) by a central stalk formed by the gamma and epsilon chains, while a peripheral stalk is formed by the delta and b chains.

Its subcellular location is the cell membrane. Its function is as follows. F(1)F(0) ATP synthase produces ATP from ADP in the presence of a proton or sodium gradient. F-type ATPases consist of two structural domains, F(1) containing the extramembraneous catalytic core and F(0) containing the membrane proton channel, linked together by a central stalk and a peripheral stalk. During catalysis, ATP synthesis in the catalytic domain of F(1) is coupled via a rotary mechanism of the central stalk subunits to proton translocation. In terms of biological role, this protein is part of the stalk that links CF(0) to CF(1). It either transmits conformational changes from CF(0) to CF(1) or is implicated in proton conduction. The sequence is that of ATP synthase subunit delta from Streptococcus pyogenes serotype M2 (strain MGAS10270).